A 160-amino-acid polypeptide reads, in one-letter code: Cytochrome b6-f complex subunit 4 (160 aa).

3 consecutive transmembrane segments (helical) span residues 36-56, 95-115, and 131-151; these read LLYMFPVVILGTFALSISLAV, LLGVLCMAAVPVGLITVPFIE, and TLFLFGTATAVWLGIGAALPI.

This sequence belongs to the cytochrome b family. PetD subfamily. In terms of assembly, the 4 large subunits of the cytochrome b6-f complex are cytochrome b6, subunit IV (17 kDa polypeptide, petD), cytochrome f and the Rieske protein, while the 4 small subunits are petG, petL, petM and petN. The complex functions as a dimer.

Its subcellular location is the plastid. The protein localises to the chloroplast thylakoid membrane. Functionally, component of the cytochrome b6-f complex, which mediates electron transfer between photosystem II (PSII) and photosystem I (PSI), cyclic electron flow around PSI, and state transitions. This chain is Cytochrome b6-f complex subunit 4, found in Oltmannsiellopsis viridis (Marine flagellate).